A 711-amino-acid chain; its full sequence is DNA topoisomerase 3 (711 aa).

Positions 2-135 constitute a Toprim domain; the sequence is KSLILAEKPS…IKRLWISSVT (134 aa). The Mg(2+) site is built by Glu8 and Asp104. A Topo IA-type catalytic domain is found at 152 to 580; that stretch reads YQNLYEAALA…EMKNFTFKVV (429 aa). An interaction with DNA region spans residues 186–191; it reads SLGRVQ. Residue Tyr305 is the O-(5'-phospho-DNA)-tyrosine intermediate of the active site.

Belongs to the type IA topoisomerase family. Mg(2+) is required as a cofactor.

It catalyses the reaction ATP-independent breakage of single-stranded DNA, followed by passage and rejoining.. Releases the supercoiling and torsional tension of DNA, which is introduced during the DNA replication and transcription, by transiently cleaving and rejoining one strand of the DNA duplex. Introduces a single-strand break via transesterification at a target site in duplex DNA. The scissile phosphodiester is attacked by the catalytic tyrosine of the enzyme, resulting in the formation of a DNA-(5'-phosphotyrosyl)-enzyme intermediate and the expulsion of a 3'-OH DNA strand. The free DNA strand then undergoes passage around the unbroken strand, thus removing DNA supercoils. Finally, in the religation step, the DNA 3'-OH attacks the covalent intermediate to expel the active-site tyrosine and restore the DNA phosphodiester backbone. The protein is DNA topoisomerase 3 of Staphylococcus epidermidis (strain ATCC 12228 / FDA PCI 1200).